The primary structure comprises 158 residues: Transcription elongation factor GreA (158 aa).

A coiled-coil region spans residues 53-73; it reads EQQSFVEGRIQEIEGKLSNAQ.

It belongs to the GreA/GreB family.

Necessary for efficient RNA polymerase transcription elongation past template-encoded arresting sites. The arresting sites in DNA have the property of trapping a certain fraction of elongating RNA polymerases that pass through, resulting in locked ternary complexes. Cleavage of the nascent transcript by cleavage factors such as GreA or GreB allows the resumption of elongation from the new 3'terminus. GreA releases sequences of 2 to 3 nucleotides. The sequence is that of Transcription elongation factor GreA from Alkalilimnicola ehrlichii (strain ATCC BAA-1101 / DSM 17681 / MLHE-1).